Consider the following 167-residue polypeptide: Small ribosomal subunit protein uS5 (167 aa).

The S5 DRBM domain occupies 19–82 (LTEKVLHINR…EAARKNMISC (64 aa)).

The protein belongs to the universal ribosomal protein uS5 family. Part of the 30S ribosomal subunit. Contacts proteins S4 and S8.

In terms of biological role, with S4 and S12 plays an important role in translational accuracy. Located at the back of the 30S subunit body where it stabilizes the conformation of the head with respect to the body. This is Small ribosomal subunit protein uS5 from Protochlamydia amoebophila (strain UWE25).